A 504-amino-acid chain; its full sequence is Alkylcitrate dehydratase phiI (504 aa).

This sequence belongs to the PrpD family. Monomer.

It catalyses the reaction (4E,11E)-2-hydroxytrideca-4,11-dien-1,2,3-tricarboxylate + 2 H(+) = [4-(deca-1,8-diyl)-2,5-dioxo-2,5-dihydro-3-furanyl]acetate + 2 H2O. It functions in the pathway secondary metabolite biosynthesis. Functionally, alkylcitrate dehydratase; part of the gene cluster that mediates the biosynthesis of the antihypercholesterolemic agents phomoidrides which are dimeric anhydrides. Within the pathway, the alkylcitrate synthase (ACS) phiJ and the alkylcitrate dehydratase (ACDH) phiI produce the decarboxylated monomeric anhydrides by coupling the C12-fatty acyl product from phiA with oxalacetic acid. The pathway begins with the highly reducing polyketide synthase phiA that catalyzes the formation of a C12-fatty acyl-ACP, starting from one acetate and 5 malonate units. The hydrolase phiM is involved in the release of the C12-fatty acyl chain from phiA. The alkylcitrate synthase (ACS) phiJ and the alkylcitrate dehydratase (ACDH) phiI then give rise to decarboxylated monomeric anhydrides by coupling the C12-fatty acyl chain with oxalacetic acid. The cyclase phiC is responsible for the dimerization of the monomeric anhydrides which leads to the production of prephomoidride that contains the characteristic bicyclo[4.3.1]deca-1,6-diene system of phomoidrides. Iterative oxidation catalyzed by the alpha-ketoglutarate-dependent dioxygenase phiK produced then phomoidride A. Finally, the methyltransferase phiE converts phomoidride A to phomoidride B via an acetalization reaction. The phosphatidylethanolamine-binding protein phiB and phiN are not essential for dimerization and their functions have still to be determined. This chain is Alkylcitrate dehydratase phiI, found in Fungal sp. (strain ATCC 74256).